The chain runs to 88 residues: ATP synthase subunit c 2 (88 aa).

2 helical membrane passes run 4 to 24 (FSWVMITAGFGMAIGSLGTGI) and 53 to 73 (IGLAMIESLAIYVFVVAMIIL).

The protein belongs to the ATPase C chain family. As to quaternary structure, F-type ATPases have 2 components, F(1) - the catalytic core - and F(0) - the membrane proton channel. F(1) has five subunits: alpha(3), beta(3), gamma(1), delta(1), epsilon(1). F(0) has three main subunits: a(1), b(2) and c(10-14). The alpha and beta chains form an alternating ring which encloses part of the gamma chain. F(1) is attached to F(0) by a central stalk formed by the gamma and epsilon chains, while a peripheral stalk is formed by the delta and b chains.

The protein localises to the cell inner membrane. In terms of biological role, f(1)F(0) ATP synthase produces ATP from ADP in the presence of a proton or sodium gradient. F-type ATPases consist of two structural domains, F(1) containing the extramembraneous catalytic core and F(0) containing the membrane proton channel, linked together by a central stalk and a peripheral stalk. During catalysis, ATP synthesis in the catalytic domain of F(1) is coupled via a rotary mechanism of the central stalk subunits to proton translocation. Key component of the F(0) channel; it plays a direct role in translocation across the membrane. A homomeric c-ring of between 10-14 subunits forms the central stalk rotor element with the F(1) delta and epsilon subunits. This Syntrophotalea carbinolica (strain DSM 2380 / NBRC 103641 / GraBd1) (Pelobacter carbinolicus) protein is ATP synthase subunit c 2.